The chain runs to 232 residues: Ashwin (232 aa).

Composition is skewed to basic and acidic residues over residues 64-97 (DLPKSRWGKMMEKKREQHEIKKETKRSSPADGLR) and 116-127 (KKTENGDNDRLR). The tract at residues 64–232 (DLPKSRWGKM…KRKIQHVTWP (169 aa)) is disordered. Positions 130–140 (PQASATSNTFR) are enriched in polar residues. A Phosphoserine modification is found at Ser143. Over residues 144-156 (DSSSSVSPLVLSS) the composition is skewed to low complexity. The segment covering 163 to 179 (KMEHGNNDNKQNHDLTH) has biased composition (basic and acidic residues). Phosphoserine occurs at positions 182, 189, and 193. Phosphothreonine is present on Thr198.

It belongs to the ashwin family. Component of the tRNA-splicing ligase complex.

It localises to the nucleus. In Bos taurus (Bovine), this protein is Ashwin.